The following is a 347-amino-acid chain: Probable replication factor C subunit 3 (347 aa).

Belongs to the activator 1 small subunits family. Heteropentamer of various rfc subunits that forms a complex (RFC) with PCNA in the presence of ATP.

Its subcellular location is the nucleus. Its function is as follows. The elongation of primed DNA templates by DNA polymerase delta and epsilon requires the action of the accessory proteins PCNA and activator 1. In Dictyostelium discoideum (Social amoeba), this protein is Probable replication factor C subunit 3 (rfc3).